The following is a 11197-amino-acid chain: Nonribosomal peptide synthetase 5 (11197 aa).

An adenylation (A) domain 1 region spans residues 19 to 413 (AQRARKQPDA…DGTLQVVGHK (395 aa)). Positions 426 to 452 (HASSSASSVGETPGVTGPISTPMGDSV) are disordered. A condensation (C) domain 1 region spans residues 690–897 (KQLRQFCQEQ…LMDESMKQQI (208 aa)). Residues 918-1310 (DAAQDYPDAP…GRHDGQLKVR (393 aa)) form an adenylation (A) domain 2 region. Residues 1446–1522 (ADRSPVHMML…DMANNIAISE (77 aa)) enclose the Carrier 1 domain. At Ser1483 the chain carries O-(pantetheine 4'-phosphoryl)serine. A condensation (C) domain 2 region spans residues 1952–2380 (VEDVYPCSPV…SDISLMDPLS (429 aa)). Positions 2406 to 2805 (VARIEPDKMA…QRKDTQIKIR (400 aa)) are adenylation (A) domain 3. In terms of domain architecture, Carrier 2 spans 2945-3021 (DSLTSTEVTI…SLAAFVDYDS (77 aa)). Ser2982 bears the O-(pantetheine 4'-phosphoryl)serine mark. The segment at 3041-3481 (EESFALSPIQ…TSTMKSEFTL (441 aa)) is epimerase (E) domain 1. The interval 3515–3957 (EEIFPCSPMQ…VSPETRCELD (443 aa)) is condensation (C) domain 3. Positions 3976–4371 (FEQQVEKIPD…RRRDNQVKVR (396 aa)) are adenylation (A) domain 4. Residues 4508-4584 (RKLTPMEQQL…ELANHARFKA (77 aa)) enclose the Carrier 3 domain. The residue at position 4545 (Ser4545) is an O-(pantetheine 4'-phosphoryl)serine. The segment at 4603–5022 (FPLLPIQRMF…LNEYTAALRS (420 aa)) is epimerase (E) domain 2. A condensation (C) domain 4 region spans residues 5069–5501 (ESIYPCSPLQ…LVGDSERQGL (433 aa)). The segment at 5521-5918 (EAQVKAIPDN…RRKDTQVKVR (398 aa)) is adenylation (A) domain 5. One can recognise a Carrier 4 domain in the interval 6068–6141 (SEAEDIIRAV…ALAQFVSQST (74 aa)). Ser6102 is subject to O-(pantetheine 4'-phosphoryl)serine. The tract at residues 6162-6512 (FSLSPIQQMF…MEILFNYFGQ (351 aa)) is epimerase (E) domain 3. A condensation (C) domain 5 region spans residues 6636–7076 (EEIFPCSPIQ…LVGAETRREM (441 aa)). The segment at 7097–7491 (ERNSQAMPDR…RRRDNQVKVR (395 aa)) is adenylation (A) domain 6. A Carrier 5 domain is found at 7636–7712 (KPKTKMEEHF…DLAGRSRFKN (77 aa)). Ser7673 carries the O-(pantetheine 4'-phosphoryl)serine modification. Positions 7733–8162 (ALLPIQRLFF…KYMLETLASQ (430 aa)) are epimerase (E) domain 4. Residues 8205-8638 (EASYPCSPLQ…MLGDSGRKRI (434 aa)) form a condensation (C) domain 6 region. An adenylation (A) domain 7 region spans residues 8660–8832 (EAHVKESPNR…DHRATATEIV (173 aa)). The 76-residue stretch at 9173–9248 (SAQTAVVQII…AMAAKAQQIG (76 aa)) folds into the Carrier 6 domain. Ser9209 carries the O-(pantetheine 4'-phosphoryl)serine modification. The segment at 9565 to 9683 (RVKDMRRAIP…LHEVVSALQK (119 aa)) is epimerase (E) domain 5. A condensation (C) domain 7 region spans residues 9721-10116 (VEDVYPTSPM…LVPAKHMEQL (396 aa)). The segment at 10136 to 10529 (DDMVRSTPTA…VGRKDTQIKI (394 aa)) is adenylation (A) domain 8. One can recognise a Carrier 7 domain in the interval 10663-10749 (LDSSDYVAMQ…TLAVTIKADM (87 aa)). Ser10708 is modified (O-(pantetheine 4'-phosphoryl)serine). The thioesterase (TE) domain stretch occupies residues 10806 to 11104 (NFLVTGSTGF…SLRPMSGPEW (299 aa)).

It belongs to the NRP synthetase family.

It participates in secondary metabolite biosynthesis. Nonribosomal peptide synthetase; part of the Fg3_54/C64 gene cluster that mediates the biosynthesis of the octapeptide fusaoctaxin A, a virulence factor that is required for cell-to-cell invasiveness of plant host. The 2 nonribosomal peptide synthetases NRPS9 and NRPS5 form an assembly line which likely utilizes GABA as a starter unit (loaded on the unique module M1 of NRPS9) and sequentially incorporates seven extender units composed of the residues L-Ala, L-allo-Ile, L-Ser, L-Val, L-Ser, L-Leu and L-Leu, respectively. During the process, each of the residues that are tethered on modules M3-M7 of NRPS5 containing an E domain can undergo an epimerization reaction to produce a D-configuration before the transpeptidation reaction occurs. The elongation of the peptidyl chain might be terminated by module M8-mediated L-Leu incorporation, followed by R domain-catalyzed 4 electron reduction to release the resulting octapeptide from the assembly line as an alcohol. Fusaoctaxin A is cleaved by the cluster specific ABC transporter FGM5 to the pentapeptide fusapentaxin A and the tripeptide fusatrixin A. The other enzymes from the cluster, FGM1, FGM2, FGM3 and FGM9 seem not to be involved in the biosynthesis of fusaoctaxin A and their functions have still to be determined. This is Nonribosomal peptide synthetase 5 from Gibberella zeae (strain ATCC MYA-4620 / CBS 123657 / FGSC 9075 / NRRL 31084 / PH-1) (Wheat head blight fungus).